The chain runs to 436 residues: UPF0597 protein DP0591 (436 aa).

The protein belongs to the UPF0597 family.

The protein is UPF0597 protein DP0591 of Desulfotalea psychrophila (strain LSv54 / DSM 12343).